A 716-amino-acid polypeptide reads, in one-letter code: Fatty acid oxidation complex subunit alpha (716 aa).

Residues 1-189 (MIYQSPTIQV…KVGAVDAVVA (189 aa)) are enoyl-CoA hydratase/isomerase. Asp-296 is a binding site for substrate. The interval 311-716 (KEVNNAAVLG…AANNGSYYQA (406 aa)) is 3-hydroxyacyl-CoA dehydrogenase. Residues Met-324, Asp-343, 400–402 (VVE), Lys-407, and Ser-429 contribute to the NAD(+) site. His-450 functions as the For 3-hydroxyacyl-CoA dehydrogenase activity in the catalytic mechanism. Asn-453 contributes to the NAD(+) binding site. Substrate contacts are provided by Asn-500 and Tyr-660.

This sequence in the N-terminal section; belongs to the enoyl-CoA hydratase/isomerase family. In the C-terminal section; belongs to the 3-hydroxyacyl-CoA dehydrogenase family. Heterotetramer of two alpha chains (FadB) and two beta chains (FadA).

The catalysed reaction is a (3S)-3-hydroxyacyl-CoA + NAD(+) = a 3-oxoacyl-CoA + NADH + H(+). It carries out the reaction a (3S)-3-hydroxyacyl-CoA = a (2E)-enoyl-CoA + H2O. The enzyme catalyses a 4-saturated-(3S)-3-hydroxyacyl-CoA = a (3E)-enoyl-CoA + H2O. It catalyses the reaction (3S)-3-hydroxybutanoyl-CoA = (3R)-3-hydroxybutanoyl-CoA. The catalysed reaction is a (3Z)-enoyl-CoA = a 4-saturated (2E)-enoyl-CoA. It carries out the reaction a (3E)-enoyl-CoA = a 4-saturated (2E)-enoyl-CoA. It functions in the pathway lipid metabolism; fatty acid beta-oxidation. Functionally, involved in the aerobic and anaerobic degradation of long-chain fatty acids via beta-oxidation cycle. Catalyzes the formation of 3-oxoacyl-CoA from enoyl-CoA via L-3-hydroxyacyl-CoA. It can also use D-3-hydroxyacyl-CoA and cis-3-enoyl-CoA as substrate. The polypeptide is Fatty acid oxidation complex subunit alpha (Shewanella baltica (strain OS195)).